Reading from the N-terminus, the 146-residue chain is Anti-sigma F factor (146 aa).

Belongs to the anti-sigma-factor family.

The enzyme catalyses L-seryl-[protein] + ATP = O-phospho-L-seryl-[protein] + ADP + H(+). It catalyses the reaction L-threonyl-[protein] + ATP = O-phospho-L-threonyl-[protein] + ADP + H(+). Its function is as follows. Binds to sigma F and blocks its ability to form an RNA polymerase holoenzyme (E-sigma F). Phosphorylates SpoIIAA on a serine residue. This phosphorylation may enable SpoIIAA to act as an anti-anti-sigma factor that counteracts SpoIIAB and thus releases sigma F from inhibition. The sequence is that of Anti-sigma F factor from Anoxybacillus flavithermus (strain DSM 21510 / WK1).